The sequence spans 310 residues: CRAL-TRIO domain-containing protein YKL091C (310 aa).

The region spanning 101-274 (ERIKLAKMYP…KYGGTSVLHN (174 aa)) is the CRAL-TRIO domain.

The chain is CRAL-TRIO domain-containing protein YKL091C from Saccharomyces cerevisiae (strain ATCC 204508 / S288c) (Baker's yeast).